Reading from the N-terminus, the 356-residue chain is tRNA N6-adenosine threonylcarbamoyltransferase (356 aa).

2 residues coordinate Fe cation: histidine 116 and histidine 120. Residues 139–143 (IVSGG), aspartate 174, glycine 187, aspartate 191, and asparagine 281 each bind substrate. Residue aspartate 309 coordinates Fe cation.

It belongs to the KAE1 / TsaD family. Fe(2+) serves as cofactor.

It is found in the cytoplasm. It catalyses the reaction L-threonylcarbamoyladenylate + adenosine(37) in tRNA = N(6)-L-threonylcarbamoyladenosine(37) in tRNA + AMP + H(+). Its function is as follows. Required for the formation of a threonylcarbamoyl group on adenosine at position 37 (t(6)A37) in tRNAs that read codons beginning with adenine. Is involved in the transfer of the threonylcarbamoyl moiety of threonylcarbamoyl-AMP (TC-AMP) to the N6 group of A37, together with TsaE and TsaB. TsaD likely plays a direct catalytic role in this reaction. The sequence is that of tRNA N6-adenosine threonylcarbamoyltransferase from Frankia casuarinae (strain DSM 45818 / CECT 9043 / HFP020203 / CcI3).